Here is a 340-residue protein sequence, read N- to C-terminus: 4-dimethylallyltryptophan N-methyltransferase easF (340 aa).

It belongs to the methyltransferase superfamily. Homodimer.

The enzyme catalyses 4-(3-methylbut-2-enyl)-L-tryptophan + S-adenosyl-L-methionine = 4-(3-methylbut-2-enyl)-L-abrine + S-adenosyl-L-homocysteine + H(+). It participates in alkaloid biosynthesis; ergot alkaloid biosynthesis. 4-dimethylallyltryptophan N-methyltransferase; part of the gene cluster that mediates the biosynthesis of fungal ergot alkaloid. DmaW catalyzes the first step of ergot alkaloid biosynthesis by condensing dimethylallyl diphosphate (DMAP) and tryptophan to form 4-dimethylallyl-L-tryptophan. The second step is catalyzed by the methyltransferase easF that methylates 4-dimethylallyl-L-tryptophan in the presence of S-adenosyl-L-methionine, resulting in the formation of 4-dimethylallyl-L-abrine. The catalase easC and the FAD-dependent oxidoreductase easE then transform 4-dimethylallyl-L-abrine to chanoclavine-I which is further oxidized by easD in the presence of NAD(+), resulting in the formation of chanoclavine-I aldehyde. Chanoclavine-I aldehyde is the precursor of ergoamides and ergopeptines in Clavicipitaceae, and clavine-type alcaloids such as fumiclavine in Trichocomaceae. However, the metabolites downstream of chanoclavine-I aldehyde in Arthrodermataceae have not been identified yet. The chain is 4-dimethylallyltryptophan N-methyltransferase easF from Arthroderma benhamiae (strain ATCC MYA-4681 / CBS 112371) (Trichophyton mentagrophytes).